We begin with the raw amino-acid sequence, 114 residues long: C-X-C motif chemokine 5 (114 aa).

A signal peptide spans 1–36 (MSLLSSRAARVPGPSSSLCALLVLLLLLTQPGPIAS). 2 disulfides stabilise this stretch: cysteine 49–cysteine 75 and cysteine 51–cysteine 91.

This sequence belongs to the intercrine alpha (chemokine CxC) family. In terms of assembly, monomer. Homodimer. N-terminal processed forms ENA-78(8-78) and ENA-78(9-78) are produced by proteolytic cleavage after secretion from peripheral blood monocytes.

It localises to the secreted. Involved in neutrophil activation. In vitro, ENA-78(8-78) and ENA-78(9-78) show a threefold higher chemotactic activity for neutrophil granulocytes. The chain is C-X-C motif chemokine 5 (CXCL5) from Homo sapiens (Human).